Here is a 603-residue protein sequence, read N- to C-terminus: Mono(2-hydroxyethyl) terephthalate hydrolase (603 aa).

Residues 1–17 (MQTTVTTMLLASVALAA) form the signal peptide. Cys18 carries N-palmitoyl cysteine lipidation. A lipid anchor (S-diacylglycerol cysteine) is attached at Cys18. Residues 24-44 (TPLPLPQQQPPQQEPPPPPVP) form a disordered region. Residues 26 to 44 (LPLPQQQPPQQEPPPPPVP) are compositionally biased toward pro residues. Cys51 and Cys92 are disulfide-bonded. Residue Gly132 participates in 4-[(2-hydroxyethoxy)carbonyl]benzoate binding. Disulfide bonds link Cys224/Cys529, Cys303/Cys320, Cys340/Cys348, and Cys577/Cys599. Ser225 (acyl-ester intermediate) is an active-site residue. Glu226 lines the 4-[(2-hydroxyethoxy)carbonyl]benzoate pocket. 5 residues coordinate Ca(2+): Asp304, Asp307, Leu309, Asp311, and Ile313. The 4-[(2-hydroxyethoxy)carbonyl]benzoate site is built by Arg411 and Ser416. Catalysis depends on charge relay system residues Asp492 and His528. His528 contributes to the 4-[(2-hydroxyethoxy)carbonyl]benzoate binding site.

Belongs to the tannase family.

Its subcellular location is the cell outer membrane. The catalysed reaction is 4-[(2-hydroxyethoxy)carbonyl]benzoate + H2O = terephthalate + ethylene glycol + H(+). Its function is as follows. Involved in the degradation and assimilation of the plastic poly(ethylene terephthalate) (PET), which allows I.sakaiensis to use PET as its major energy and carbon source for growth. Likely acts synergistically with PETase to depolymerize PET. Catalyzes the hydrolysis of mono(2-hydroxyethyl) terephthalate (MHET) into its two environmentally benign monomers, terephthalate and ethylene glycol. Does not show activity against PET, bis(hydroxyethyl) terephthalate (BHET), pNP-aliphatic esters or typical aromatic ester compounds catalyzed by the tannase family enzymes, such as ethyl gallate and ethyl ferulate. In Piscinibacter sakaiensis (Ideonella sakaiensis), this protein is Mono(2-hydroxyethyl) terephthalate hydrolase.